A 308-amino-acid chain; its full sequence is Malonate utilization transcriptional regulator (308 aa).

Residues 9–66 enclose the HTH lysR-type domain; it reads ITFRKLSVFMMFMAKGNIARTAEAMKLSSVSVHRALHTLEEGVGCPLFVHKGRNLLPL. A DNA-binding region (H-T-H motif) is located at residues 26–45; sequence IARTAEAMKLSSVSVHRALH.

It belongs to the LysR transcriptional regulatory family.

Functionally, transcriptional regulator of the mau genes for malonate utilization. In Klebsiella pneumoniae, this protein is Malonate utilization transcriptional regulator (mauR).